The sequence spans 328 residues: Tetraacyldisaccharide 4'-kinase (328 aa).

ATP is bound at residue 55 to 62; it reads TAGGNGKT.

Belongs to the LpxK family.

The catalysed reaction is a lipid A disaccharide + ATP = a lipid IVA + ADP + H(+). It participates in glycolipid biosynthesis; lipid IV(A) biosynthesis; lipid IV(A) from (3R)-3-hydroxytetradecanoyl-[acyl-carrier-protein] and UDP-N-acetyl-alpha-D-glucosamine: step 6/6. Functionally, transfers the gamma-phosphate of ATP to the 4'-position of a tetraacyldisaccharide 1-phosphate intermediate (termed DS-1-P) to form tetraacyldisaccharide 1,4'-bis-phosphate (lipid IVA). This chain is Tetraacyldisaccharide 4'-kinase, found in Yersinia enterocolitica serotype O:8 / biotype 1B (strain NCTC 13174 / 8081).